Consider the following 99-residue polypeptide: Leydig cell tumor 10 kDa protein homolog (99 aa).

The segment at M1–I36 is disordered.

It belongs to the UPF0390 family.

In terms of biological role, may have a potential role in hypercalcemia of malignancy. This chain is Leydig cell tumor 10 kDa protein homolog (C19orf53), found in Homo sapiens (Human).